The following is a 195-amino-acid chain: Transcription factor 15 (195 aa).

The segment at 44-65 (LEAARRGPGPGSGRRASNGAGP) is disordered. Positions 56 to 65 (GRRASNGAGP) are enriched in low complexity. The residue at position 60 (S60) is a Phosphoserine. Positions 70 to 122 (RQRQAANARERDRTQSVNTAFTALRTLIPTEPVDRKLSKIETLRLASSYIAHL) constitute a bHLH domain.

In terms of assembly, heterodimer; efficient DNA binding requires dimerization with another bHLH protein, such as TCF3/E12. Interacts with MEOX2. In terms of tissue distribution, expressed in heart and skeletal muscle. Specifically expressed in a subpopulation of embryonic stem cells (ESCs), that are still undifferentiated but primed for ifferentiation. Expressed in hematopoietic stem cells (HSCs).

It localises to the nucleus. Early transcription factor that plays a key role in somitogenesis, paraxial mesoderm development and regulation of stem cell pluripotency. Essential for the mesenchymal to epithelial transition associated with somite formation. Required for somite morphogenesis, thereby regulating patterning of the axial skeleton and skeletal muscles. Required for proper localization of somite epithelium markers during the mesenchymal to epithelial transition. Also plays a key role in regulation of stem cell pluripotency. Promotes pluripotency exit of embryonic stem cells (ESCs) by priming ESCs for differentiation. Acts as a key regulator of self-renewal of hematopoietic stem cells (HSCs) by mediating HSCs quiescence and long-term self-renewal. Together with MEOX2, regulates transcription in heart endothelial cells to regulate fatty acid transport across heart endothelial cells. Acts by forming a heterodimer with another helix-loop-helix (bHLH) protein, such as TCF3/E12, that binds DNA on E-box motifs (5'-CANNTG-3') and activates transcription of target genes. This is Transcription factor 15 from Mus musculus (Mouse).